A 582-amino-acid polypeptide reads, in one-letter code: PTS system lactose-specific EIICB component (582 aa).

The PTS EIIC type-3 domain occupies 8–409 (IEKGKPFFEK…VVDVIIYYPF (402 aa)). The next 9 helical transmembrane spans lie at 30–50 (GFIA…ITYV), 64–84 (GILM…VAGT), 103–123 (INFI…AADP), 137–157 (KGLL…NFFV), 176–196 (VFKD…LDLL), 222–242 (GWIG…VGIH), 283–303 (FVAT…FMWL), 339–359 (VFFI…KFFV), and 381–401 (IVMG…LIVV). The segment at 453–473 (ASEADTDDTSSVDETTSTSST) is disordered. A compositionally biased stretch (low complexity) spans 464 to 473 (VDETTSTSST). Residues 479-582 (QTNVLVLCAG…LEFVKQQFNN (104 aa)) enclose the PTS EIIB type-3 domain. Residue C486 is the Phosphocysteine intermediate; for EIIB activity of the active site. C486 bears the Phosphocysteine; by EIIA mark.

It is found in the cell membrane. It catalyses the reaction lactose(out) + N(pros)-phospho-L-histidyl-[protein] = lactose 6-phosphate(in) + L-histidyl-[protein]. Functionally, the phosphoenolpyruvate-dependent sugar phosphotransferase system (sugar PTS), a major carbohydrate active transport system, catalyzes the phosphorylation of incoming sugar substrates concomitantly with their translocation across the cell membrane. The enzyme II LacEF PTS system is involved in lactose transport. This is PTS system lactose-specific EIICB component from Staphylococcus epidermidis (strain ATCC 35984 / DSM 28319 / BCRC 17069 / CCUG 31568 / BM 3577 / RP62A).